The chain runs to 109 residues: U4-lycotoxin-Ls1b (109 aa).

Residues 1–22 (MKVLVLFSVLFLTLFSYSSTEA) form the signal peptide. A propeptide spanning residues 23-44 (IDEFDSDAEDDMLSLMANEQVR) is cleaved from the precursor. Residues 45 to 88 (AKACTPRLHDCSHDRHSCCRGELSKDVCYCFYPEGEDKTEVCSC) form a knottin domain region. Disulfide bonds link cysteine 48/cysteine 63, cysteine 55/cysteine 72, cysteine 62/cysteine 88, and cysteine 74/cysteine 86. Residues 89 to 108 (QQPKSHKYIEKVVDKAKTVV) form a linear cationic cytotoxin domain region.

The protein belongs to the neurotoxin 19 (CSTX) family. 05 (U4-Lctx) subfamily. As to expression, expressed by the venom gland.

The protein localises to the secreted. In terms of biological role, enhances the high-affinity desensitization of human P2RX3 purinoceptors. The sequence is that of U4-lycotoxin-Ls1b from Lycosa singoriensis (Wolf spider).